The following is a 213-amino-acid chain: MRTSSFLDRLIGEVDSALRTLVLPQKRITTRQSPAENLADTVLSAQEKKHISGLMRVNHAGEVCAQALYQGQALTARLTHIKEQMASAAAEEVDHLAWCEERLYELGSKPSLLNPIWYCGSVLLGALAGLAGDKISLGFVAETERQVTAHLQRHLHYLPEKDKKTIAILKRMQEDEEHHAHTAMEAGAVELPYIIKQLMNAVSKLMTQSSYYI.

Fe cation is bound by residues E62, E92, H95, E144, E176, and H179.

The protein belongs to the COQ7 family. The cofactor is Fe cation.

It localises to the cell membrane. The catalysed reaction is a 5-methoxy-2-methyl-3-(all-trans-polyprenyl)benzene-1,4-diol + AH2 + O2 = a 3-demethylubiquinol + A + H2O. Its pathway is cofactor biosynthesis; ubiquinone biosynthesis. In terms of biological role, catalyzes the hydroxylation of 2-nonaprenyl-3-methyl-6-methoxy-1,4-benzoquinol during ubiquinone biosynthesis. This Legionella pneumophila (strain Corby) protein is 3-demethoxyubiquinol 3-hydroxylase.